Here is a 624-residue protein sequence, read N- to C-terminus: Alpha-mannosidase I MNS4 (624 aa).

Topologically, residues 1-7 (MDSNFKW) are cytoplasmic. A helical; Signal-anchor for type II membrane protein transmembrane segment spans residues 8–28 (LLFAILISLTFSGFVLHHGVL). The Lumenal portion of the chain corresponds to 29-624 (AESVKPDEAK…ETDDQRSYSS (596 aa)). Asn115 carries an N-linked (GlcNAc...) asparagine glycan. The Proton donor role is filled by Glu122. Asp262 is a catalytic residue. The active-site Proton donor is Glu355. The active site involves Glu376. Thr466 lines the Ca(2+) pocket. Asn494 carries an N-linked (GlcNAc...) asparagine glycan. The disordered stretch occupies residues 574 to 624 (QTVEKRPQEEEGFTSQSEPIMTISGGSSNDQTGQELTLLESETDDQRSYSS). The span at 586–608 (FTSQSEPIMTISGGSSNDQTGQE) shows a compositional bias: polar residues.

Belongs to the glycosyl hydrolase 47 family. It depends on Ca(2+) as a cofactor.

The protein resides in the endoplasmic reticulum membrane. It participates in protein modification; protein glycosylation. Functionally, can convert Man(9)GlcNAc(2) and Man(8)GlcNAc(2) into N-glycans with a terminal alpha-1,6-linked Man residue in the C-branch. Functions in the formation of unique N-glycan structures that are specifically recognized by components of the endoplasmic reticulum-associated degradation (ERAD) machinery, which leads to the degradation of misfolded glycoproteins. Most likely generates N-glycan signal on misfolded glycoproteins that is subsequently recognized by OS9. Required for ERAD of the heavily glycosylated and misfolded BRI1 variants BRI1-5 and BRI1-9. Does not seem to play role in N-glycan processing of correctly folded proteins destined for secretion. The protein is Alpha-mannosidase I MNS4 (MNS4) of Arabidopsis thaliana (Mouse-ear cress).